A 246-amino-acid polypeptide reads, in one-letter code: Envelope glycoprotein L (246 aa).

Positions methionine 1–alanine 19 are cleaved as a signal peptide. Residues leucine 29–arginine 235 enclose the gL betaherpesvirus-type domain. A disulfide bond links cysteine 134 and cysteine 139.

It belongs to the herpesviridae glycoprotein L (gL) family. Betaherpesvirinae gL subfamily. As to quaternary structure, interacts with glycoprotein H (gH); this interaction is necessary for the correct processing and cell surface expression of gH.

It localises to the virion membrane. Its subcellular location is the host cell membrane. It is found in the host Golgi apparatus. The protein localises to the host trans-Golgi network. Its function is as follows. The heterodimer glycoprotein H-glycoprotein L is required for the fusion of viral and plasma membranes leading to virus entry into the host cell. Acts as a functional inhibitor of gH and maintains gH in an inhibited form. Upon binding to host integrins, gL dissociates from gH leading to activation of the viral fusion glycoproteins gB and gH. The protein is Envelope glycoprotein L of Homo sapiens (Human).